We begin with the raw amino-acid sequence, 265 residues long: Undecaprenyl-diphosphatase (265 aa).

7 helical membrane-spanning segments follow: residues 38 to 58 (RSDF…CLAL), 75 to 95 (RDYV…GLIV), 108 to 128 (PVAW…HVAG), 135 to 155 (VVTW…GVFP), 181 to 201 (FVFM…LLEM), 215 to 235 (VAVA…WLLS), and 244 to 264 (VFAV…PAAA).

It belongs to the UppP family.

It localises to the cell inner membrane. It catalyses the reaction di-trans,octa-cis-undecaprenyl diphosphate + H2O = di-trans,octa-cis-undecaprenyl phosphate + phosphate + H(+). Its function is as follows. Catalyzes the dephosphorylation of undecaprenyl diphosphate (UPP). Confers resistance to bacitracin. The protein is Undecaprenyl-diphosphatase of Xanthomonas oryzae pv. oryzae (strain MAFF 311018).